The chain runs to 381 residues: MTTMSDLSPDLVGEILTRVPMTSLISVRCTCKMWNALSKEGIFFKAARKQFMGFTMMDSRVCSMKFDLQGIRNNEHDFVDPCIKQIAKLDQIEVSKVLQCDGLLLCVGKDNSRLLVWNPYLGQTRFIKPRKRFNKLEWYALGYDNNHNYKILMNYDTGHLFGYEIYDFSSDSWRVLDVSPDCHIPFHQQSVSLNGNTYFLAQEKIIVEGEEEEVVDEIEKFLLCFDFTTERFGPRLPLPFHSDVLETVAISCVRDDQLAVLYQRFETWEIWVTTKIDPTAVSWSMFLSVDMEPPTGCQFDDEAGSFFIDEENKVAVFFNSDLFNPRVENRNRRYPTAYIIGQDGYFKSATLREAPDLVKPDPYVYCCPLVWSSYAPSLVQL.

Residues 1-47 (MTTMSDLSPDLVGEILTRVPMTSLISVRCTCKMWNALSKEGIFFKAA) enclose the F-box domain.

This is Putative F-box protein At4g17200 from Arabidopsis thaliana (Mouse-ear cress).